A 248-amino-acid chain; its full sequence is 5'-nucleotidase SurE (248 aa).

Positions 8, 9, 39, and 92 each coordinate a divalent metal cation.

It belongs to the SurE nucleotidase family. A divalent metal cation is required as a cofactor.

The protein resides in the cytoplasm. The enzyme catalyses a ribonucleoside 5'-phosphate + H2O = a ribonucleoside + phosphate. Its function is as follows. Nucleotidase that shows phosphatase activity on nucleoside 5'-monophosphates. The polypeptide is 5'-nucleotidase SurE (Tolumonas auensis (strain DSM 9187 / NBRC 110442 / TA 4)).